The chain runs to 67 residues: ATP synthase F(0) complex subunit 8 (67 aa).

A helical transmembrane segment spans residues 8 to 24 (TWFINIVSMILTLFIVF). An N6-acetyllysine; alternate modification is found at lysine 54. Position 54 is an N6-succinyllysine; alternate (lysine 54). N6-acetyllysine is present on lysine 57.

It belongs to the ATPase protein 8 family. Component of the ATP synthase complex composed at least of ATP5F1A/subunit alpha, ATP5F1B/subunit beta, ATP5MC1/subunit c (homooctomer), MT-ATP6/subunit a, MT-ATP8/subunit 8, ATP5ME/subunit e, ATP5MF/subunit f, ATP5MG/subunit g, ATP5MK/subunit k, ATP5MJ/subunit j, ATP5F1C/subunit gamma, ATP5F1D/subunit delta, ATP5F1E/subunit epsilon, ATP5PF/subunit F6, ATP5PB/subunit b, ATP5PD/subunit d, ATP5PO/subunit OSCP. ATP synthase complex consists of a soluble F(1) head domain (subunits alpha(3) and beta(3)) - the catalytic core - and a membrane F(0) domain - the membrane proton channel (subunits c, a, 8, e, f, g, k and j). These two domains are linked by a central stalk (subunits gamma, delta, and epsilon) rotating inside the F1 region and a stationary peripheral stalk (subunits F6, b, d, and OSCP). Interacts with PRICKLE3.

The protein localises to the mitochondrion membrane. In terms of biological role, subunit 8, of the mitochondrial membrane ATP synthase complex (F(1)F(0) ATP synthase or Complex V) that produces ATP from ADP in the presence of a proton gradient across the membrane which is generated by electron transport complexes of the respiratory chain. ATP synthase complex consist of a soluble F(1) head domain - the catalytic core - and a membrane F(1) domain - the membrane proton channel. These two domains are linked by a central stalk rotating inside the F(1) region and a stationary peripheral stalk. During catalysis, ATP synthesis in the catalytic domain of F(1) is coupled via a rotary mechanism of the central stalk subunits to proton translocation. In vivo, can only synthesize ATP although its ATP hydrolase activity can be activated artificially in vitro. Part of the complex F(0) domain. The polypeptide is ATP synthase F(0) complex subunit 8 (Equus asinus (Donkey)).